A 106-amino-acid polypeptide reads, in one-letter code: Small ribosomal subunit protein uS10 (106 aa).

It belongs to the universal ribosomal protein uS10 family. Part of the 30S ribosomal subunit.

In terms of biological role, involved in the binding of tRNA to the ribosomes. The protein is Small ribosomal subunit protein uS10 of Synechococcus sp. (strain RCC307).